The primary structure comprises 387 residues: Ferrochelatase (387 aa).

Fe cation-binding residues include His-196 and Glu-277.

It belongs to the ferrochelatase family.

Its subcellular location is the cytoplasm. It catalyses the reaction heme b + 2 H(+) = protoporphyrin IX + Fe(2+). Its pathway is porphyrin-containing compound metabolism; protoheme biosynthesis; protoheme from protoporphyrin-IX: step 1/1. Catalyzes the ferrous insertion into protoporphyrin IX. In Trichodesmium erythraeum (strain IMS101), this protein is Ferrochelatase.